Here is a 129-residue protein sequence, read N- to C-terminus: MSNVPVELKYSKEHEWLRKEADGTYTVGITEHAQELLGDMVFVDLPDVGATVAAGDDCAVAESVKAASDIYAPVSGEIVAVNDALSDSPELVNSEPYAGGWIFKIKASDESEIDSLLDATAYEALLEDE.

In terms of domain architecture, Lipoyl-binding spans 24–106 (TYTVGITEHA…YAGGWIFKIK (83 aa)). Lysine 65 carries the post-translational modification N6-lipoyllysine.

The protein belongs to the GcvH family. In terms of assembly, the glycine cleavage system is composed of four proteins: P, T, L and H. Requires (R)-lipoate as cofactor.

Functionally, the glycine cleavage system catalyzes the degradation of glycine. The H protein shuttles the methylamine group of glycine from the P protein to the T protein. The polypeptide is Glycine cleavage system H protein (Citrobacter koseri (strain ATCC BAA-895 / CDC 4225-83 / SGSC4696)).